Reading from the N-terminus, the 208-residue chain is Uracil phosphoribosyltransferase (208 aa).

Residues Arg-78, Arg-103, and 130-138 (DPMLATGGT) contribute to the 5-phospho-alpha-D-ribose 1-diphosphate site. Residues Ile-193 and 198 to 200 (GDA) each bind uracil. Asp-199 provides a ligand contact to 5-phospho-alpha-D-ribose 1-diphosphate.

This sequence belongs to the UPRTase family. Requires Mg(2+) as cofactor.

The catalysed reaction is UMP + diphosphate = 5-phospho-alpha-D-ribose 1-diphosphate + uracil. The protein operates within pyrimidine metabolism; UMP biosynthesis via salvage pathway; UMP from uracil: step 1/1. Its activity is regulated as follows. Allosterically activated by GTP. Functionally, catalyzes the conversion of uracil and 5-phospho-alpha-D-ribose 1-diphosphate (PRPP) to UMP and diphosphate. The sequence is that of Uracil phosphoribosyltransferase from Nitratidesulfovibrio vulgaris (strain ATCC 29579 / DSM 644 / CCUG 34227 / NCIMB 8303 / VKM B-1760 / Hildenborough) (Desulfovibrio vulgaris).